The primary structure comprises 434 residues: [Pyruvate dehydrogenase (acetyl-transferring)] kinase isozyme 1, mitochondrial (434 aa).

A mitochondrion-targeting transit peptide spans 1-26 (MRLARLLRGGTSVRPLCAVPCASRSL). A Phosphotyrosine; by FGFR1 modification is found at Y136. Residues 161-391 (TEYKESFGVD…DAVIYIKALS (231 aa)) form the Histidine kinase domain. At Y241 the chain carries Phosphotyrosine; by FGFR1, ABL1, FLT3 and JAK2. Y242 carries the phosphotyrosine; by FGFR1 modification. Residues 277 to 284 (ELFKNAMR), D316, 335 to 336 (ST), and 352 to 357 (GFGYGL) each bind ATP. T336 bears the Phosphothreonine mark. K403 carries the N6-succinyllysine modification.

This sequence belongs to the PDK/BCKDK protein kinase family. In terms of assembly, homodimer, and heterodimer with PDK2. Interacts with the pyruvate dehydrogenase complex subunit DLAT, and is part of the multimeric pyruvate dehydrogenase complex that contains multiple copies of pyruvate dehydrogenase (E1), dihydrolipoamide acetyltransferase (DLAT, E2) and lipoamide dehydrogenase (DLD, E3). Interacts with phosphoglycerate kinase PGK1; the interaction is direct, occurs under hypoxic conditions and leads to PDK1-mediated inhibition of pyruvate dehydrogenase complex activity. Phosphorylated by constitutively activated ABL1, FGFR1, FLT3 and JAK2 (in vitro), and this may also occur in cancer cells that express constitutively activated ABL1, FGFR1, FLT3 and JAK2. Phosphorylation at Tyr-241 and Tyr-242 strongly increases kinase activity, while phosphorylation at Tyr-136 has a lesser effect. Phosphorylated under hypoxic conditions at Thr-336 by phosphoglycerate kinase PGK1 which has an activating effect. As to expression, detected in pancreas islets (at protein level). Expressed predominantly in the heart.

The protein localises to the mitochondrion matrix. It carries out the reaction L-seryl-[pyruvate dehydrogenase E1 alpha subunit] + ATP = O-phospho-L-seryl-[pyruvate dehydrogenase E1 alpha subunit] + ADP + H(+). With respect to regulation, activated by binding to the pyruvate dehydrogenase complex subunit DLAT. Strongly activated by NADH plus acetyl-coenzyme A. Inhibited by dichloroacetate. In terms of biological role, kinase that plays a key role in regulation of glucose and fatty acid metabolism and homeostasis via phosphorylation of the pyruvate dehydrogenase subunits PDHA1 and PDHA2. This inhibits pyruvate dehydrogenase activity, and thereby regulates metabolite flux through the tricarboxylic acid cycle, down-regulates aerobic respiration and inhibits the formation of acetyl-coenzyme A from pyruvate. Plays an important role in cellular responses to hypoxia and is important for cell proliferation under hypoxia. This is [Pyruvate dehydrogenase (acetyl-transferring)] kinase isozyme 1, mitochondrial (Pdk1) from Rattus norvegicus (Rat).